A 302-amino-acid chain; its full sequence is MNQTAINRADVRTRFIFDDMPVRGLHVRLENVWQHIVKQKNYPAAIRRALGELLAAGVLLSGNLKNEGTLIVQVQGRGRLKMLVAEAASDRTVRATARWDETAEIADDESLGDLLGEGGVFVLTLQPKDGEPWQGVVPLEGGGIAQMLVNYMKRSEQLDTHIVLSASDEAAGGLLVQRLPEEVLDEEAWEHVSTLARTLTAEELAGLDAQHVLYRLFHETPPRVFEPETFEFSCTCSRGKVSDMLLMLGGEEVGGVVVEQGSIEVDCDFCHSKYVFDETDVNALFGEDVVGVAKGLPRHTVQ.

Cystine bridges form between Cys-234-Cys-236 and Cys-267-Cys-270.

Belongs to the HSP33 family. In terms of processing, under oxidizing conditions two disulfide bonds are formed involving the reactive cysteines. Under reducing conditions zinc is bound to the reactive cysteines and the protein is inactive.

The protein resides in the cytoplasm. Its function is as follows. Redox regulated molecular chaperone. Protects both thermally unfolding and oxidatively damaged proteins from irreversible aggregation. Plays an important role in the bacterial defense system toward oxidative stress. This is 33 kDa chaperonin from Neisseria meningitidis serogroup B (strain ATCC BAA-335 / MC58).